Reading from the N-terminus, the 300-residue chain is Lysenin-related protein 2 (300 aa).

The segment at 12–35 (EQIEVDVVAVWKEGYVYENRGSTS) is N-terminal cap domain. Residues 36-109 (VEQKIKITKG…SKEIEHTITI (74 aa)) are beta-hairpin domain. Residues 110–158 (PPTSKFTRWQLNADVGGADIEYMYLIDEVTPIGGTLSIPQVIKSRAKIL) form an N-terminal cap domain region. The C-terminal receptor-binding domain stretch occupies residues 159 to 299 (VGREIYLGET…EDKWILEVVK (141 aa)). Positions 187, 229, 235, and 284 each coordinate an N-(acyl)-sphingosylphosphocholine. An intrachain disulfide couples cysteine 274 to cysteine 285.

This sequence belongs to the lysenin family. As to quaternary structure, binds to sphingomyelin as a monomer by using its C-terminal domain. Forms a nonamer when sphingomyelin/LRP-2 ratio is lower than ca 500. Oligomerization, but not binding, is influenced by the fluidity of sphingomyelin. In terms of tissue distribution, expressed by coelomocytes.

The protein localises to the secreted. It is found in the target cell membrane. Its function is as follows. Pore-forming toxin that specifically binds sphingomyelin in the plasma membrane of various cells. Has hemolytic activity. It also has antibacterial activities against B.megaterium. This is Lysenin-related protein 2 from Eisenia fetida (Red wiggler worm).